Here is a 296-residue protein sequence, read N- to C-terminus: Nitrogenase iron protein 2 (296 aa).

Residue G11–S18 coordinates ATP. C99 is a binding site for [4Fe-4S] cluster. R102 carries the post-translational modification ADP-ribosylarginine; by dinitrogenase reductase ADP-ribosyltransferase. C133 is a [4Fe-4S] cluster binding site.

It belongs to the NifH/BchL/ChlL family. Homodimer. [4Fe-4S] cluster serves as cofactor. Post-translationally, the reversible ADP-ribosylation of Arg-102 inactivates the nitrogenase reductase and regulates nitrogenase activity.

The catalysed reaction is N2 + 8 reduced [2Fe-2S]-[ferredoxin] + 16 ATP + 16 H2O = H2 + 8 oxidized [2Fe-2S]-[ferredoxin] + 2 NH4(+) + 16 ADP + 16 phosphate + 6 H(+). In terms of biological role, the key enzymatic reactions in nitrogen fixation are catalyzed by the nitrogenase complex, which has 2 components: the iron protein and the molybdenum-iron protein. The chain is Nitrogenase iron protein 2 (nifH2) from Azorhizobium caulinodans (strain ATCC 43989 / DSM 5975 / JCM 20966 / LMG 6465 / NBRC 14845 / NCIMB 13405 / ORS 571).